A 141-amino-acid polypeptide reads, in one-letter code: Transcriptional regulator MraZ (141 aa).

2 SpoVT-AbrB domains span residues 5–47 (EYNH…PNEE) and 75–118 (AADC…SKER).

The protein belongs to the MraZ family. As to quaternary structure, forms oligomers.

Its subcellular location is the cytoplasm. The protein resides in the nucleoid. The chain is Transcriptional regulator MraZ from Lachnoclostridium phytofermentans (strain ATCC 700394 / DSM 18823 / ISDg) (Clostridium phytofermentans).